A 201-amino-acid polypeptide reads, in one-letter code: Auxin-binding protein 1 (201 aa).

An N-terminal signal peptide occupies residues 1-38 (MAPDLSELAAAAAARGAYLAGVGVAVLLAASFLPVAES). An intrachain disulfide couples cysteine 40 to cysteine 193. The Zn(2+) site is built by histidine 95, histidine 97, and glutamate 101. Residue asparagine 133 is glycosylated (N-linked (GlcNAc...) asparagine). Histidine 144 lines the Zn(2+) pocket. The Prevents secretion from ER motif lies at 198–201 (KDEL).

Homodimer. Glycosylated. In terms of tissue distribution, expressed in roots, coleoptiles, leaves, stems, tassels and ears.

Its subcellular location is the endoplasmic reticulum lumen. Functionally, receptor for the plant hormone auxin. In Zea mays (Maize), this protein is Auxin-binding protein 1.